A 1413-amino-acid chain; its full sequence is Leucine-rich repeat receptor protein kinase MSL1 (1413 aa).

The signal sequence occupies residues 1 to 23 (MAPMLSIASRSPSPALIAPHASA). N-linked (GlcNAc...) asparagine glycosylation is found at Asn-153 and Asn-192. 29 LRR repeats span residues 185–209 (FQSL…MVNL), 210–233 (QHLQ…LFDL), 235–257 (MLKV…IAHL), 258–281 (QQLT…LGSL), 282–304 (KNLE…SFSN), 306–329 (SRLL…IRAL), 330–353 (VNLV…LCQL), 354–377 (KNLQ…IGNL), 379–401 (QLEV…IGNL), 402–425 (EILE…VGEL), 427–449 (NLRQ…LGNC), 450–473 (KKLT…LADL), 475–497 (AVVL…IQNW), 498–518 (SNVS…PGLP), 519–542 (LHLV…ICQG), 543–565 (TFLQ…TFKG), 567–589 (KNLT…YLAL), 590–613 (LPLV…LWES), 615–636 (TILD…SIGK), 637–661 (LLSL…IGAL), 662–685 (RNLT…LFNC), 687–709 (NLVT…ISHL), 710–733 (TKLN…LCVA), 745–769 (VQHI…INNC), 771–793 (ILVE…LAEL), 794–817 (RNIT…PVPL), 818–841 (ASLQ…IGNI), 843–866 (PQIT…LLCK), and 868–890 (SLNH…CHED). N-linked (GlcNAc...) asparagine glycans are attached at residues Asn-304 and Asn-317. Residues Asn-461, Asn-496, and Asn-499 are each glycosylated (N-linked (GlcNAc...) asparagine). Residues Asn-554, Asn-568, and Asn-601 are each glycosylated (N-linked (GlcNAc...) asparagine). N-linked (GlcNAc...) asparagine glycosylation is found at Asn-663 and Asn-697. The N-linked (GlcNAc...) asparagine glycan is linked to Asn-768. A glycan (N-linked (GlcNAc...) asparagine) is linked at Asn-795. Residues Asn-878, Asn-901, Asn-917, and Asn-928 are each glycosylated (N-linked (GlcNAc...) asparagine). LRR repeat units lie at residues 918 to 942 (FTKL…IARV) and 944 to 966 (SLYY…ICGM). Asn-973 carries N-linked (GlcNAc...) asparagine glycosylation. Residues 1016 to 1036 (TICCIATAIVIVLVVILVVYL) form a helical membrane-spanning segment. The region spanning 1107–1401 (FDGMHVVGDG…IEAMEYGPLV (295 aa)) is the Protein kinase domain. ATP contacts are provided by residues 1113-1121 (VGDGGFGTV) and Lys-1135. Asp-1234 (proton acceptor) is an active-site residue.

It belongs to the protein kinase superfamily. Ser/Thr protein kinase family. As to expression, expressed in roots, leaves, shoots and spikelets.

Its subcellular location is the cell membrane. It catalyses the reaction L-seryl-[protein] + ATP = O-phospho-L-seryl-[protein] + ADP + H(+). The enzyme catalyses L-threonyl-[protein] + ATP = O-phospho-L-threonyl-[protein] + ADP + H(+). In terms of biological role, receptor-like kinase that may play a role male and female sporogenesis. This chain is Leucine-rich repeat receptor protein kinase MSL1, found in Oryza sativa subsp. japonica (Rice).